We begin with the raw amino-acid sequence, 480 residues long: Oxysterol-binding protein-related protein 2 (480 aa).

The disordered stretch occupies residues 1–60; the sequence is MNGEEEFFDAVTGFDSDNSSGEFSEANQKVTGMIDLDTSKNNRIGKTGERPSQENGIQKH. The segment covering 15–30 has biased composition (polar residues); that stretch reads DSDNSSGEFSEANQKV. A phosphoserine mark is found at S19 and S20. Residues K90, 178–179, and 427–431 contribute to the a 1,2-diacyl-sn-glycero-3-phospho-(1D-myo-inositol-4,5-bisphosphate) site; these read HH and EEKQR.

Belongs to the OSBP family. In terms of assembly, monomer. Homotetramer; phosphatidylinositol-4,5-bisphosphate binding promotes formation of stable tetramers. Interacts with DIAPH1. Widely expressed.

The protein localises to the cytoplasm. It is found in the cytosol. It localises to the lipid droplet. Its subcellular location is the cell membrane. Its function is as follows. Intracellular transport protein that binds sterols and phospholipids and mediates lipid transport between intracellular compartments. Increases plasma membrane cholesterol levels and decreases phosphatidylinositol-4,5-bisphosphate levels in the cell membrane. Binds phosphoinositides, such as phosphatidylinositol-4,5-bisphosphate. Exhibits strong binding to phosphatidic acid and weak binding to phosphatidylinositol 3-phosphate. Binds cholesterol, dehydroergosterol, 22(R)-hydroxycholesterol and 25-hydroxycholesterol (in vitro). In Homo sapiens (Human), this protein is Oxysterol-binding protein-related protein 2 (OSBPL2).